A 171-amino-acid polypeptide reads, in one-letter code: Protein-export protein SecB (171 aa).

It belongs to the SecB family. In terms of assembly, homotetramer, a dimer of dimers. One homotetramer interacts with 1 SecA dimer.

It is found in the cytoplasm. Its function is as follows. One of the proteins required for the normal export of preproteins out of the cell cytoplasm. It is a molecular chaperone that binds to a subset of precursor proteins, maintaining them in a translocation-competent state. It also specifically binds to its receptor SecA. This Histophilus somni (strain 129Pt) (Haemophilus somnus) protein is Protein-export protein SecB.